Reading from the N-terminus, the 405-residue chain is Alpha-N-acetylgalactosaminidase (405 aa).

Intrachain disulfides connect Cys-21-Cys-63, Cys-25-Cys-32, and Cys-111-Cys-142. Substrate is bound by residues Asp-61 to Asp-62 and Lys-138. Asp-140 acts as the Nucleophile in catalysis. An N-linked (GlcNAc...) asparagine glycan is attached at Asn-161. Cys-171 and Cys-193 are joined by a disulfide. Ser-172 is a substrate binding site. A glycan (N-linked (GlcNAc...) asparagine) is linked at Asn-185. 2 residues coordinate substrate: Arg-197 and Asp-201. The Proton donor role is filled by Asp-201. Asn-369 is a glycosylation site (N-linked (GlcNAc...) asparagine).

It belongs to the glycosyl hydrolase 27 family. In terms of assembly, homodimer.

The protein localises to the lysosome. The enzyme catalyses Cleavage of non-reducing alpha-(1-&gt;3)-N-acetylgalactosamine residues from human blood group A and AB mucin glycoproteins, Forssman hapten and blood group A lacto series glycolipids.. The catalysed reaction is a neolactoside IV(3)-alpha-GalNAc,IV(2)-alpha-Fuc-nLc4Cer(d18:1(4E)) + H2O = a neolactoside IV(2)-alpha-Fuc-nLc4Cer(d18:1(4E)) + N-acetyl-alpha-D-galactosamine. It catalyses the reaction a neolactoside IV(3)-alpha-GalNAc,IV(2)-alpha-Fuc-nLc4Cer(d18:0) + H2O = a neolactoside IV(2)-alpha-Fuc-nLc4Cer(d18:0) + N-acetyl-alpha-D-galactosamine. It carries out the reaction a globoside IV3GalNAc-Gb4Cer + H2O = N-acetyl-alpha-D-galactosamine + a globoside Gb4Cer. Removes terminal alpha-N-acetylgalactosamine residues from glycolipids and glycopeptides. Required for the breakdown of glycolipids. This chain is Alpha-N-acetylgalactosaminidase (NAGA), found in Gallus gallus (Chicken).